The primary structure comprises 1097 residues: uncharacterized protein (1097 aa).

Positions 31 to 1087 (LLNVARQEEE…TALNKLRTRH (1057 aa)) form a coiled coil.

This sequence belongs to the TRAFAC class myosin-kinesin ATPase superfamily. Myosin family. As to expression, specifically expressed in muscles of the head including temporalis and tensor veli palatini.

Has most probably lost the function in masticatory muscles contraction suspected for its homologs in dog (AC F1PT61) and apes. This is an uncharacterized protein from Homo sapiens (Human).